A 271-amino-acid chain; its full sequence is Phosphatidylinositol transfer protein beta isoform (271 aa).

Lys-215 carries the post-translational modification N6-acetyllysine. Ser-262 bears the Phosphoserine mark.

Belongs to the PtdIns transfer protein family. PI transfer class I subfamily. Constitutive phosphorylation of Ser-262 has no effect on phospholipid transfer activity but is required for Golgi targeting. In terms of tissue distribution, expressed abundantly in brain, kidney, liver, and lung, but in a lesser amount in testis.

Its subcellular location is the golgi apparatus. It localises to the golgi apparatus membrane. The protein localises to the endoplasmic reticulum membrane. The enzyme catalyses a 1,2-diacyl-sn-glycero-3-phosphocholine(in) = a 1,2-diacyl-sn-glycero-3-phosphocholine(out). It catalyses the reaction a 1,2-diacyl-sn-glycero-3-phospho-(1D-myo-inositol)(in) = a 1,2-diacyl-sn-glycero-3-phospho-(1D-myo-inositol)(out). The catalysed reaction is an N-(acyl)-sphingosylphosphocholine(in) = an N-(acyl)-sphingosylphosphocholine(out). Phosphatidylinositol transfer activity is inhibited by N-ethylmaleimide. In terms of biological role, catalyzes the transfer of phosphatidylinositol between membranes. Also catalyzes the transfer of phosphatidylcholine and sphingomyelin between membranes. Required for COPI-mediated retrograde transport from the Golgi to the endoplasmic reticulum; phosphatidylinositol and phosphatidylcholine transfer activity is essential for this function. In Rattus norvegicus (Rat), this protein is Phosphatidylinositol transfer protein beta isoform (Pitpnb).